The chain runs to 474 residues: MKKQLDKITPRNIDFSQWYTDIVLNTKLASYGPVKGTMIFRPYGYRIWELIQKYLDEEFKKVNVDNVYFPLLIPESLFNKEKDHIEGFSPEIATVTRVGQKKLEENLFIRPTSEVVMMDYFSNEINSYRDLPLIYNQWCNVMRWEKTTRPFLRTSEFLWQEGHTIHSSYNEAENFCLKILNIYEKFAKEILLLPVICGKKTEKEKFAGAKDTYTIESLMFDGQALQCGTSHFFADNFTKVYDIKFQNKENKLEHAYSTSWGVSTRLIGALIMTHSDDNGLVLPSKISPIQIQIIQIKNTEQIDQVVENIKDKLSDYRIDVDNSDKSFGFKISEAEIKGIPIRIEIGPRDLENNQITISRRDQQENKIKIDYKDVKKVVDQMIKDYDLSLYNSALENRKNRTFKANTIEEYIEILKQNQGFVLVPFCGRVECEQDIKTKTATNSRCIPFDQKEVKAKCFNCKKDTCLQVIFARAY.

This sequence belongs to the class-II aminoacyl-tRNA synthetase family. ProS type 3 subfamily. In terms of assembly, homodimer.

It is found in the cytoplasm. The catalysed reaction is tRNA(Pro) + L-proline + ATP = L-prolyl-tRNA(Pro) + AMP + diphosphate. Functionally, catalyzes the attachment of proline to tRNA(Pro) in a two-step reaction: proline is first activated by ATP to form Pro-AMP and then transferred to the acceptor end of tRNA(Pro). This Mycoplasma mycoides subsp. mycoides SC (strain CCUG 32753 / NCTC 10114 / PG1) protein is Proline--tRNA ligase.